Here is a 309-residue protein sequence, read N- to C-terminus: MTISQTVPRGAVAVRRRRRIRISTVVWFTMPAAAIMLLVLGVPLVYSFYYSLTGWSLVVPGSDQDFIGLLNYTDVLRSSEFWAAIRVTLIYAVVAVSLECALGILFAVLLNLEFFGRGLFRSLMLIPMVITPAVVGIFWKLLYEQDSGVFNYLLGTLGFEPVPWLSLTVALASVIIVDVWQSTPFFTLIILAGLQSLDRDTVSAAQADGANALQVFRYLTLPHLVPYIMIAAAFRIIGVMADFDKIFLLTLGGPGNVTTTLSVYAYNTGFKVFDIGRTTAISWIYVVFVLAISAPLIWRLFRGASVNRH.

Transmembrane regions (helical) follow at residues 25–45, 89–109, 123–143, 174–194, 221–241, 246–266, and 278–298; these read VVWFTMPAAAIMLLVLGVPLV, LIYAVVAVSLECALGILFAVL, LMLIPMVITPAVVGIFWKLLY, VIIVDVWQSTPFFTLIILAGL, LPHLVPYIMIAAAFRIIGVMA, IFLLTLGGPGNVTTTLSVYAY, and TTAISWIYVVFVLAISAPLIW. In terms of domain architecture, ABC transmembrane type-1 spans 85-296; sequence IRVTLIYAVV…VFVLAISAPL (212 aa).

The protein belongs to the binding-protein-dependent transport system permease family. MalFG subfamily.

The protein resides in the cell inner membrane. Functionally, probably part of the binding-protein-dependent transport system y4oPQRS. This system probably transports a sugar-like molecule. Probably responsible for the translocation of the substrate across the membrane. This chain is Probable ABC transporter permease protein y4oQ, found in Sinorhizobium fredii (strain NBRC 101917 / NGR234).